The chain runs to 557 residues: Arginine--tRNA ligase (557 aa).

The 'HIGH' region motif lies at 132–142; the sequence is ANPTGNLHLGH.

The protein belongs to the class-I aminoacyl-tRNA synthetase family. In terms of assembly, monomer.

The protein resides in the cytoplasm. The enzyme catalyses tRNA(Arg) + L-arginine + ATP = L-arginyl-tRNA(Arg) + AMP + diphosphate. The protein is Arginine--tRNA ligase of Geobacillus thermodenitrificans (strain NG80-2).